The following is a 290-amino-acid chain: Nitrogenase iron protein 1 (290 aa).

10-17 contributes to the ATP binding site; it reads GKGGIGKS. Cysteine 98 is a binding site for [4Fe-4S] cluster. The residue at position 101 (arginine 101) is an ADP-ribosylarginine; by dinitrogenase reductase ADP-ribosyltransferase. [4Fe-4S] cluster is bound at residue cysteine 133.

It belongs to the NifH/BchL/ChlL family. In terms of assembly, homodimer. It depends on [4Fe-4S] cluster as a cofactor. The reversible ADP-ribosylation of Arg-101 inactivates the nitrogenase reductase and regulates nitrogenase activity.

The catalysed reaction is N2 + 8 reduced [2Fe-2S]-[ferredoxin] + 16 ATP + 16 H2O = H2 + 8 oxidized [2Fe-2S]-[ferredoxin] + 2 NH4(+) + 16 ADP + 16 phosphate + 6 H(+). Nitrogenase holoenzyme is subject to 'conformational protection' by FeSII; under oxidizing conditions FeSII binds to the holoenzyme and reversibly protects it from oxidation. Its function is as follows. The key enzymatic reactions in nitrogen fixation are catalyzed by the nitrogenase complex, which has 2 components: the iron protein (component 2) and a component 1 which is either a molybdenum-iron protein, a vanadium-iron, or an iron-iron protein. The protein is Nitrogenase iron protein 1 (nifH1) of Azotobacter vinelandii.